A 214-amino-acid chain; its full sequence is Reticulon-3-A (214 aa).

The segment at methionine 1–glycine 21 is disordered. Positions valine 26–glutamate 214 constitute a Reticulon domain. Helical transmembrane passes span methionine 46–leucine 66 and valine 155–valine 175.

Homodimer. As to expression, expressed in the animal hemisphere at the four-cell stage. During gastrulation, expression becomes restricted to the prospective neuroectoderm. At the early tail bud stage, expressed in the head structure. At the tadpole stage, expressed in head and neural tissues including the otic vesicle and optic nerve.

It localises to the endoplasmic reticulum membrane. The protein localises to the golgi apparatus membrane. Its function is as follows. May be involved in membrane trafficking in the early secretory pathway. The polypeptide is Reticulon-3-A (rtn3-a) (Xenopus laevis (African clawed frog)).